A 213-amino-acid polypeptide reads, in one-letter code: GTP cyclohydrolase 1 (213 aa).

Zn(2+) is bound by residues Cys-104, His-107, and Cys-175.

It belongs to the GTP cyclohydrolase I family. Homomer.

It catalyses the reaction GTP + H2O = 7,8-dihydroneopterin 3'-triphosphate + formate + H(+). It participates in cofactor biosynthesis; 7,8-dihydroneopterin triphosphate biosynthesis; 7,8-dihydroneopterin triphosphate from GTP: step 1/1. The polypeptide is GTP cyclohydrolase 1 (Brucella canis (strain ATCC 23365 / NCTC 10854 / RM-666)).